The following is a 607-amino-acid chain: MNKTYDAIVIGGGHAGIEAAYALAKRAFNVALITLNINRLAMLPCNPSIGGSAKGIITREIDALGGMQGYFADLAMIQIKMLNTSKGPAVWSLRAQIDKEKYCQIILDDIKKQSNITLIEDEVVDLIVNENQCHGVVTKENGNISAKVVVMTTGVYMNSRILRGTDIKYDGPDGEKTSSSLSKNLMKYGFEILRLKTGTPCRIYTDSIDFSKVEKEQLDKNELSFSSHSNVKLDEQTCCFLTHTTAKTKEIILNNLDKSSLYSGIIIGIGPRYCPSVEDKIVRFQEKETHHIFFEPETAKGDIMYINGLSTSMPESVQDQMIASIPGLEKARVQKYGYAIEYDAINPLNLYKSLESKTLSNFFSAGQPNGTSGYEEAAAQGLIAGINAANKLDKMPMMEIKRSSAYIGVLIDDIVTKGTNEPYRMLTSRAEYRLLLRNDNVDERLSQYAFENKMISAQSYNKVLDKYKLINNEIQKLKDEYVSSNSELAKKYNVTSGVSKLKLLANPAVDPKDILGNDFPYLDEITIQVRLFGYLKKQESAAEKMFRLEKLKLPIDLDYNLVENLATEARQKLNQIKPTTIGQASRISGINPADIQMLMYYLNNRKK.

FAD contacts are provided by residues 11–16, Val123, and Ser178; that span reads GGGHAG. 270–284 serves as a coordination point for NAD(+); the sequence is GPRYCPSVEDKIVRF. Gln367 serves as a coordination point for FAD.

The protein belongs to the MnmG family. As to quaternary structure, homodimer. Heterotetramer of two MnmE and two MnmG subunits. FAD serves as cofactor.

The protein localises to the cytoplasm. Functionally, NAD-binding protein involved in the addition of a carboxymethylaminomethyl (cmnm) group at the wobble position (U34) of certain tRNAs, forming tRNA-cmnm(5)s(2)U34. In Metamycoplasma arthritidis (strain 158L3-1) (Mycoplasma arthritidis), this protein is tRNA uridine 5-carboxymethylaminomethyl modification enzyme MnmG.